A 121-amino-acid polypeptide reads, in one-letter code: Large ribosomal subunit protein bL12 (121 aa).

This sequence belongs to the bacterial ribosomal protein bL12 family. As to quaternary structure, homodimer. Part of the ribosomal stalk of the 50S ribosomal subunit. Forms a multimeric L10(L12)X complex, where L10 forms an elongated spine to which 2 to 4 L12 dimers bind in a sequential fashion. Binds GTP-bound translation factors.

In terms of biological role, forms part of the ribosomal stalk which helps the ribosome interact with GTP-bound translation factors. Is thus essential for accurate translation. This chain is Large ribosomal subunit protein bL12, found in Clostridium novyi (strain NT).